Reading from the N-terminus, the 340-residue chain is PRKC apoptosis WT1 regulator protein (340 aa).

Residues 1–18 (MATGGYRTSSGLGGSTTD) show a composition bias toward polar residues. The tract at residues 1–253 (MATGGYRTSS…TDRSGFPRYN (253 aa)) is disordered. Positions 47–82 (SDAAGKPPAGALGTPAAAAANELNNNLPGGAPAAPA) are enriched in low complexity. The short motif at 68 to 72 (ELNNN) is the B30.2/SPRY domain-binding motif element. Ser-108 is modified (phosphoserine). The Nuclear localization signal motif lies at 145-161 (RKGKGQIEKRKLREKRR). The interval 145–203 (RKGKGQIEKRKLREKRRSTGVVNIPAAECLDEYEDDEAGQKERKREDAITQQNTIQNEA) is selective for apoptosis induction in cancer cells (SAC). Thr-163 is subject to Phosphothreonine; by PKA. Basic and acidic residues predominate over residues 182–192 (AGQKERKREDA). Residues 186 to 206 (ERKREDAITQQNTIQNEAVNL) adopt a coiled-coil conformation. Polar residues predominate over residues 193 to 203 (ITQQNTIQNEA). Ser-231 bears the Phosphoserine mark. Basic and acidic residues predominate over residues 242–253 (SRTDRSGFPRYN). A leucine-zipper region spans residues 300 to 340 (IGKLKEEIDLLNRDLDDIEDENEQLKQENKTLLKVVGQLTR).

As to quaternary structure, homooligomer. Interacts (via the C-terminal region) with WT1. Interacts with THAP1. Interacts with AATF. Interacts with BACE1. Interacts with SPSB1 (via B30.2/SPRY domain); this interaction is direct and occurs in association with the Elongin BC complex. Interacts with SPSB2 (via B30.2/SPRY domain); this interaction occurs in association with the Elongin BC complex. Interacts with SPSB4 (via B30.2/SPRY domain); this interaction occurs in association with the Elongin BC complex. Component of a ternary complex composed of SQSTM1 and PRKCZ. Interacts with actin. In terms of processing, preferentially phosphorylated at the Thr-163 by PKC in cancer cells. In terms of tissue distribution, widely expressed. Expression is elevated in various neurodegenerative diseases such as amyotrophic lateral sclerosis, Alzheimer, Parkinson and Huntington diseases and stroke. Down-regulated in several cancers.

The protein localises to the cytoplasm. It is found in the nucleus. In terms of biological role, pro-apoptotic protein capable of selectively inducing apoptosis in cancer cells, sensitizing the cells to diverse apoptotic stimuli and causing regression of tumors in animal models. Induces apoptosis in certain cancer cells by activation of the Fas prodeath pathway and coparallel inhibition of NF-kappa-B transcriptional activity. Inhibits the transcriptional activation and augments the transcriptional repression mediated by WT1. Down-regulates the anti-apoptotic protein BCL2 via its interaction with WT1. Also seems to be a transcriptional repressor by itself. May be directly involved in regulating the amyloid precursor protein (APP) cleavage activity of BACE1. The chain is PRKC apoptosis WT1 regulator protein (PAWR) from Homo sapiens (Human).